The chain runs to 145 residues: Ribosomal RNA large subunit methyltransferase H (145 aa).

Residues Leu-68, Gly-95, and 113–118 (FSKMTF) each bind S-adenosyl-L-methionine.

Belongs to the RNA methyltransferase RlmH family. As to quaternary structure, homodimer.

Its subcellular location is the cytoplasm. It carries out the reaction pseudouridine(1915) in 23S rRNA + S-adenosyl-L-methionine = N(3)-methylpseudouridine(1915) in 23S rRNA + S-adenosyl-L-homocysteine + H(+). In terms of biological role, specifically methylates the pseudouridine at position 1915 (m3Psi1915) in 23S rRNA. The protein is Ribosomal RNA large subunit methyltransferase H of Mycoplasmopsis pulmonis (strain UAB CTIP) (Mycoplasma pulmonis).